Here is a 111-residue protein sequence, read N- to C-terminus: PHD finger-like domain-containing protein 5A (111 aa).

Belongs to the PHF5 family.

In Drosophila melanogaster (Fruit fly), this protein is PHD finger-like domain-containing protein 5A.